We begin with the raw amino-acid sequence, 460 residues long: Exodeoxyribonuclease 7 large subunit (460 aa).

Residues 438 to 460 (ARVEKVNREEEKQSGSQKNGTRD) are disordered. Over residues 439 to 450 (RVEKVNREEEKQ) the composition is skewed to basic and acidic residues. A compositionally biased stretch (polar residues) spans 451–460 (SGSQKNGTRD).

The protein belongs to the XseA family. As to quaternary structure, heterooligomer composed of large and small subunits.

It localises to the cytoplasm. The enzyme catalyses Exonucleolytic cleavage in either 5'- to 3'- or 3'- to 5'-direction to yield nucleoside 5'-phosphates.. In terms of biological role, bidirectionally degrades single-stranded DNA into large acid-insoluble oligonucleotides, which are then degraded further into small acid-soluble oligonucleotides. This Brevibacillus brevis (strain 47 / JCM 6285 / NBRC 100599) protein is Exodeoxyribonuclease 7 large subunit.